The primary structure comprises 197 residues: Probable GTP-binding protein EngB (197 aa).

The EngB-type G domain maps to serine 25–arginine 197. Residues glycine 33–serine 40, glycine 60–glutamine 64, aspartate 79–glycine 82, threonine 146–aspartate 149, and methionine 177–isoleucine 179 contribute to the GTP site. Serine 40 and threonine 62 together coordinate Mg(2+).

The protein belongs to the TRAFAC class TrmE-Era-EngA-EngB-Septin-like GTPase superfamily. EngB GTPase family. The cofactor is Mg(2+).

In terms of biological role, necessary for normal cell division and for the maintenance of normal septation. In Wolbachia pipientis wMel, this protein is Probable GTP-binding protein EngB.